The chain runs to 508 residues: MDPFPDLYATPGDSLDHFLEHSLQPQRDWKEEGQDAWERIERFFREQCFRDELLLDQEVRVIKVVKGGSSGKGTTLNHRSDQDMILFLSCFSSFEEQARNREVVISFIKKRLIHCSRSLAYNIIVLTHREGKRAPRSLTLKVQSRKTDDIIWMDILPAYDALGPISRDSKPAPAIYETLIRSKGYPGDFSPSFTELQRHFVKTRPVKLKNLLRLVKFWYLQCLRRKYGRGAVLPSKYALELLTIYAWEMGTESSDSFNLDEGFVAVMELLVNYRDICIYWTKYYNFQNEVVRNFLKKQLKGDRPIILDPADPTNNLGRRKGWEQVAAEAAFCLLQVCCTTVGPSERWNVQRARDVQVRVKQTGTVDWTLWTNPYSPIRKMKAEIRREKNFGGELRISFQEPGGERQLLSSRKTLADYGIFSKVNIQVLETFPPEILVFVKYPGGQSKPFTIDPDDTILDLKEKIEDAGGPCAEDQVLLLDDEELEDDESLKELEIKDCDTIILIRVID.

S69 lines the ATP pocket. The Mg(2+) site is built by D81, D83, and D154. Positions 213 and 216 each coordinate ATP. The Ubiquitin-like domain occupies 435–473 (ILVFVKYPGGQSKPFTIDPDDTILDLKEKIEDAGGPCAE).

It belongs to the 2-5A synthase family. Requires Mg(2+) as cofactor. In terms of tissue distribution, strongly expressed in spleen dendritic cells, whereas, in bone marrow-derived dendritic cells, the amount increases during the maturation process. Expressed in many organs, the highest levels being in thymus, lung, and bone marrow.

The catalysed reaction is 3 ATP = 5'-triphosphoadenylyl-(2'-&gt;5')-adenylyl-(2'-&gt;5')-adenosine + 2 diphosphate. Its activity is regulated as follows. Produced as a latent enzyme which is activated by dsRNA generated during the course of viral infection. The dsRNA activator must be at least 15 nucleotides long, and no modification of the 2'-hydroxyl group is tolerated. ssRNA or dsDNA do not act as activators. Its function is as follows. Interferon-induced, dsRNA-activated antiviral enzyme which plays a critical role in cellular innate antiviral response. Synthesizes oligomers of 2'-5'-oligoadenylates (2-5A) from ATP which then bind to the inactive monomeric form of ribonuclease L (RNase L) leading to its dimerization and subsequent activation. Activation of RNase L leads to degradation of cellular as well as viral RNA, resulting in the inhibition of protein synthesis, thus terminating viral replication. Can mediate the antiviral effect via the classical RNase L-dependent pathway or an alternative antiviral pathway independent of RNase L. The chain is 2'-5'-oligoadenylate synthase-like protein 2 (Oasl2) from Mus musculus (Mouse).